We begin with the raw amino-acid sequence, 608 residues long: Coilin (608 aa).

The tract at residues 134 to 272 (KETGGYESES…RKKAKRQWLR (139 aa)) is disordered. The span at 141 to 155 (SESEEDELEEEAEEF) shows a compositional bias: acidic residues. A compositionally biased stretch (basic residues) spans 161 to 179 (ASKKRKTSSKNQSTKRKKC). A Nuclear localization signal 1 motif is present at residues 163-170 (KKRKTSSK). Ser187 bears the Phosphoserine mark. Residues 211–228 (DVQSANNDEQNNDSTKPM) are compositionally biased toward polar residues. Positions 235-245 (SQQEESKEHND) are enriched in basic and acidic residues. Residues 253–260 (TKKTPSRS) carry the Nuclear localization signal 2 motif. A compositionally biased stretch (basic residues) spans 256–269 (TPSRSARRKKAKRQ). In terms of domain architecture, Tudor; atypical spans 410 to 510 (YEQLVAYTGS…LLDVRSVKTS (101 aa)). The disordered stretch occupies residues 513 to 585 (DSAEVAKSAL…KKGSSSGGSW (73 aa)). Over residues 558 to 585 (EALSAKKAALSQANNGWNKKGSSSGGSW) the composition is skewed to low complexity.

This sequence belongs to the coilin family. As to quaternary structure, homooligomer. Interaction with RNA results in multimerization due to structural alteration in the NOD domain.

The protein resides in the nucleus. It localises to the cajal body. In terms of biological role, probable component of nuclear coiled bodies, also known as Cajal bodies or CBs, which are involved in the modification and assembly of nucleoplasmic snRNPs. Required for CBs formation. Binds snRNAs and non-specific artificial RNA via the N-terminal part of the NOD domain and via the NLS2 region (212-282) of the IDD domain. The two sites are able to function independently and provide effective RNA-binding in a non-cooperative manner. The chain is Coilin from Arabidopsis thaliana (Mouse-ear cress).